A 101-amino-acid chain; its full sequence is Acylphosphatase (101 aa).

One can recognise an Acylphosphatase-like domain in the interval 13 to 101; it reads RARILVRGVV…GEFRGFEIRY (89 aa). Residues Arg28 and Asn46 contribute to the active site.

The protein belongs to the acylphosphatase family.

The catalysed reaction is an acyl phosphate + H2O = a carboxylate + phosphate + H(+). The protein is Acylphosphatase (acyP) of Aeropyrum pernix (strain ATCC 700893 / DSM 11879 / JCM 9820 / NBRC 100138 / K1).